Here is a 224-residue protein sequence, read N- to C-terminus: Phosphoribosylformylglycinamidine synthase subunit PurQ (224 aa).

Residues 3–224 (FGVVVFPGSN…GLLEKVVALA (222 aa)) enclose the Glutamine amidotransferase type-1 domain. The Nucleophile role is filled by Cys-86. Active-site residues include His-195 and Glu-197.

As to quaternary structure, part of the FGAM synthase complex composed of 1 PurL, 1 PurQ and 2 PurS subunits.

It localises to the cytoplasm. The catalysed reaction is N(2)-formyl-N(1)-(5-phospho-beta-D-ribosyl)glycinamide + L-glutamine + ATP + H2O = 2-formamido-N(1)-(5-O-phospho-beta-D-ribosyl)acetamidine + L-glutamate + ADP + phosphate + H(+). It catalyses the reaction L-glutamine + H2O = L-glutamate + NH4(+). The protein operates within purine metabolism; IMP biosynthesis via de novo pathway; 5-amino-1-(5-phospho-D-ribosyl)imidazole from N(2)-formyl-N(1)-(5-phospho-D-ribosyl)glycinamide: step 1/2. In terms of biological role, part of the phosphoribosylformylglycinamidine synthase complex involved in the purines biosynthetic pathway. Catalyzes the ATP-dependent conversion of formylglycinamide ribonucleotide (FGAR) and glutamine to yield formylglycinamidine ribonucleotide (FGAM) and glutamate. The FGAM synthase complex is composed of three subunits. PurQ produces an ammonia molecule by converting glutamine to glutamate. PurL transfers the ammonia molecule to FGAR to form FGAM in an ATP-dependent manner. PurS interacts with PurQ and PurL and is thought to assist in the transfer of the ammonia molecule from PurQ to PurL. The chain is Phosphoribosylformylglycinamidine synthase subunit PurQ from Nostoc sp. (strain PCC 7120 / SAG 25.82 / UTEX 2576).